The sequence spans 216 residues: Minor fimbrial subunit HifD (216 aa).

The N-terminal stretch at 1 to 19 is a signal peptide; sequence MQKTPKKLTALCHQQSTAS. A lipid anchor (N-palmitoyl cysteine) is attached at Cys20. A lipid anchor (S-diacylglycerol cysteine) is attached at Cys20. A disordered region spans residues 159–180; sequence PINVDGSQANSEKAPDTGKEQN.

This sequence belongs to the fimbrial protein family.

The protein resides in the cell membrane. Its subcellular location is the fimbrium. Functionally, may be a minor structural protein required for pilus biogenesis. This Haemophilus influenzae protein is Minor fimbrial subunit HifD (hifD).